A 580-amino-acid chain; its full sequence is Multidrug resistance-like ATP-binding protein MdlB (580 aa).

The region spanning Ile-25–Gln-310 is the ABC transmembrane type-1 domain. 5 consecutive transmembrane segments (helical) span residues Ile-26–Ile-46, Phe-61–Phe-81, Val-142–Thr-162, Trp-165–Tyr-185, and Leu-258–Val-278. The ABC transporter domain maps to Ile-341 to Phe-575. Position 375-382 (Gly-375–Ser-382) interacts with ATP.

Belongs to the ABC transporter superfamily. Drug exporter-2 (TC 3.A.1.117) family.

Its subcellular location is the cell membrane. It catalyses the reaction ATP + H2O + xenobioticSide 1 = ADP + phosphate + xenobioticSide 2.. The polypeptide is Multidrug resistance-like ATP-binding protein MdlB (mdlB) (Buchnera aphidicola subsp. Schizaphis graminum (strain Sg)).